A 116-amino-acid chain; its full sequence is U11-theraphotoxin-Hhn1b (116 aa).

Positions 1-21 are cleaved as a signal peptide; the sequence is MNTVRVAFLLVFVLAVSLGQA. Positions 22 to 74 are excised as a propeptide; sequence DKDENRMEMQEKTEQGKSYLDFAENLLLQKLEELEAKLLEEDSEESRNSRQKR. The tract at residues 61–83 is disordered; that stretch reads EEDSEESRNSRQKRCIGEGVPCD. 3 disulfide bridges follow: C75–C90, C82–C95, and C89–C110.

The protein belongs to the neurotoxin 14 (magi-1) family. 01 (HNTX-16) subfamily. Expressed by the venom gland.

The protein resides in the secreted. Probable ion channel inhibitor. This is U11-theraphotoxin-Hhn1b from Cyriopagopus hainanus (Chinese bird spider).